A 1391-amino-acid chain; its full sequence is Enhancer of mRNA-decapping protein 4 (1391 aa).

WD repeat units follow at residues 170–210, 226–274, 292–331, and 340–390; these read GITG…GKIQ, SIFR…TNHN, GHSG…QDQP, and HNGR…SLQT. 2 disordered regions span residues 703–724 and 897–924; these read QASP…AMPQ and DWKS…LAKS. Over residues 915–924 the composition is skewed to basic and acidic residues; it reads KKDEMELAKS. The stretch at 935 to 968 forms a coiled coil; the sequence is ELQEELLCMLRSQQKELSDLRQNQLELMKKLTDH.

It belongs to the WD repeat EDC4 family.

Its subcellular location is the cytoplasm. It is found in the P-body. The protein localises to the nucleus. Its function is as follows. In the process of mRNA degradation, seems to play a role in mRNA decapping. This is Enhancer of mRNA-decapping protein 4 (edc4) from Xenopus laevis (African clawed frog).